The primary structure comprises 380 residues: MSKRDYYEILGVTKTATEGEMKVAFRKLAMTYHPDRNPGDKDAEIKFKEINEAYQCLSDGQKRAAYDRFGHAAFSQGGGGPGFGNEFGDFMSDIFDNFFGDGRGGGGARGRGGTPGRERGADLRYNLEITLEEAFTGKAETIKIPTSITCEVCDGSGAKPGSKPRTCPTCAGYGRVRAAQGFFAIERTCPNCHGRGEIVDDPCTACQGAGRVNRERTLSINVPAGVDDGLRIRLAGEGESGLRGGPAGDLYVFLSIKQHEFFQRDGADLFCRVPISMVTAALSGEITVPVIDGSQTQVRIPAGTQTAKQFRIKGKGMPVLRSREVGDLYIQVFVETPQNLTKRQRELLQEFDLSASPENHPESAGFFSKVRDFFGGAVRP.

In terms of domain architecture, J spans 5–70 (DYYEILGVTK…QKRAAYDRFG (66 aa)). The CR-type zinc-finger motif lies at 137–215 (GKAETIKIPT…CQGAGRVNRE (79 aa)). Zn(2+) contacts are provided by C150, C153, C167, C170, C189, C192, C203, and C206. CXXCXGXG motif repeat units lie at residues 150–157 (CEVCDGSG), 167–174 (CPTCAGYG), 189–196 (CPNCHGRG), and 203–210 (CTACQGAG).

The protein belongs to the DnaJ family. In terms of assembly, homodimer. It depends on Zn(2+) as a cofactor.

It is found in the cytoplasm. Functionally, participates actively in the response to hyperosmotic and heat shock by preventing the aggregation of stress-denatured proteins and by disaggregating proteins, also in an autonomous, DnaK-independent fashion. Unfolded proteins bind initially to DnaJ; upon interaction with the DnaJ-bound protein, DnaK hydrolyzes its bound ATP, resulting in the formation of a stable complex. GrpE releases ADP from DnaK; ATP binding to DnaK triggers the release of the substrate protein, thus completing the reaction cycle. Several rounds of ATP-dependent interactions between DnaJ, DnaK and GrpE are required for fully efficient folding. Also involved, together with DnaK and GrpE, in the DNA replication of plasmids through activation of initiation proteins. The protein is Chaperone protein DnaJ of Methylobacterium radiotolerans (strain ATCC 27329 / DSM 1819 / JCM 2831 / NBRC 15690 / NCIMB 10815 / 0-1).